A 325-amino-acid chain; its full sequence is D site-binding protein (325 aa).

3 disordered regions span residues 1–99 (MARP…APGL), 127–200 (GLPP…DTVE), and 229–255 (RFSE…EQKD). The segment covering 17–28 (GPAGTPPGGGAL) has biased composition (gly residues). 2 stretches are compositionally biased toward low complexity: residues 29–38 (LGLRSLLQGT) and 57–80 (ALPA…PAGA). Position 86 is a phosphoserine (Ser-86). The span at 129-153 (PPSPPPPGGPSPEPSPARTPAPSPG) shows a compositional bias: pro residues. The span at 157–167 (CGSASPRSSPG) shows a compositional bias: low complexity. Residues 255–318 (DEKYWSRRYK…SHYRAVLSRY (64 aa)) form the bZIP domain. The basic motif stretch occupies residues 257–279 (KYWSRRYKNNEAAKRSRDARRLK). Positions 283–297 (ISVRAAFLEKENALL) are leucine-zipper.

This sequence belongs to the bZIP family. PAR subfamily. As to quaternary structure, binds DNA as a homodimer or a heterodimer. Can form a heterodimer with TEF. As to expression, ubiquitously expressed. Expressed in the suprachiasmatic nuclei (SCN) and in most peripheral tissues, with a strong circadian rhythmicity.

The protein localises to the nucleus. In terms of biological role, this transcriptional activator recognizes and binds to the sequence 5'-RTTAYGTAAY-3' found in the promoter of genes such as albumin, CYP2A4 and CYP2A5. It is not essential for circadian rhythm generation, but modulates important clock output genes. May be a direct target for regulation by the circadian pacemaker component clock. May affect circadian period and sleep regulation. The polypeptide is D site-binding protein (DBP) (Homo sapiens (Human)).